The primary structure comprises 317 residues: Protoheme IX farnesyltransferase (317 aa).

9 helical membrane-spanning segments follow: residues 29–49, 53–73, 102–122, 123–143, 151–171, 179–199, 224–241, 245–267, and 283–303; these read LILLFLITTAAAMEVAGQGRV, LLLITLGSGTCAAAAANTINC, VFLAVLLAITAFSLLAAFANL, LSACLAMAGIAVYVGVYTHWL, IVIGGAAGAIPPLVGWAAVTG, VLFGMIFVWTPPHFWPLAMLI, IFLYTLALVPTSLLLVYP, VSWGYGVVAIALGSWFIYRAWQL, and FSILYMMLLCAAMVGDRLLLP.

It belongs to the UbiA prenyltransferase family. Protoheme IX farnesyltransferase subfamily.

The protein localises to the cell inner membrane. The enzyme catalyses heme b + (2E,6E)-farnesyl diphosphate + H2O = Fe(II)-heme o + diphosphate. It functions in the pathway porphyrin-containing compound metabolism; heme O biosynthesis; heme O from protoheme: step 1/1. Its function is as follows. Converts heme B (protoheme IX) to heme O by substitution of the vinyl group on carbon 2 of heme B porphyrin ring with a hydroxyethyl farnesyl side group. In Thermosynechococcus vestitus (strain NIES-2133 / IAM M-273 / BP-1), this protein is Protoheme IX farnesyltransferase.